The sequence spans 206 residues: Ribosomal RNA small subunit methyltransferase G (206 aa).

S-adenosyl-L-methionine is bound by residues Gly-74, Leu-79, 125–126, and Arg-140; that span reads VE.

It belongs to the methyltransferase superfamily. RNA methyltransferase RsmG family.

The protein localises to the cytoplasm. It catalyses the reaction guanosine(527) in 16S rRNA + S-adenosyl-L-methionine = N(7)-methylguanosine(527) in 16S rRNA + S-adenosyl-L-homocysteine. Functionally, specifically methylates the N7 position of guanine in position 527 of 16S rRNA. The protein is Ribosomal RNA small subunit methyltransferase G of Shewanella frigidimarina (strain NCIMB 400).